A 492-amino-acid chain; its full sequence is Bifunctional purine biosynthesis protein PurH (492 aa).

Residues 1-144 (MKKAILSVSN…KNYKHVTTIV (144 aa)) form the MGS-like domain.

The protein belongs to the PurH family.

The catalysed reaction is (6R)-10-formyltetrahydrofolate + 5-amino-1-(5-phospho-beta-D-ribosyl)imidazole-4-carboxamide = 5-formamido-1-(5-phospho-D-ribosyl)imidazole-4-carboxamide + (6S)-5,6,7,8-tetrahydrofolate. It carries out the reaction IMP + H2O = 5-formamido-1-(5-phospho-D-ribosyl)imidazole-4-carboxamide. It participates in purine metabolism; IMP biosynthesis via de novo pathway; 5-formamido-1-(5-phospho-D-ribosyl)imidazole-4-carboxamide from 5-amino-1-(5-phospho-D-ribosyl)imidazole-4-carboxamide (10-formyl THF route): step 1/1. Its pathway is purine metabolism; IMP biosynthesis via de novo pathway; IMP from 5-formamido-1-(5-phospho-D-ribosyl)imidazole-4-carboxamide: step 1/1. In Staphylococcus aureus (strain bovine RF122 / ET3-1), this protein is Bifunctional purine biosynthesis protein PurH.